We begin with the raw amino-acid sequence, 263 residues long: 3'-5' ssDNA/RNA exonuclease TatD (263 aa).

A divalent metal cation-binding residues include Glu91, His127, and His152.

The protein belongs to the metallo-dependent hydrolases superfamily. TatD-type hydrolase family. TatD subfamily. Monomer. Mg(2+) is required as a cofactor.

The protein resides in the cytoplasm. In terms of biological role, 3'-5' exonuclease that prefers single-stranded DNA and RNA. May play a role in the H(2)O(2)-induced DNA damage repair. The sequence is that of 3'-5' ssDNA/RNA exonuclease TatD from Klebsiella pneumoniae (strain 342).